The following is a 279-amino-acid chain: Ribosomal RNA small subunit methyltransferase A (279 aa).

6 residues coordinate S-adenosyl-L-methionine: His11, Leu13, Gly42, Glu63, Asp88, and Asn104.

It belongs to the class I-like SAM-binding methyltransferase superfamily. rRNA adenine N(6)-methyltransferase family. RsmA subfamily.

The protein localises to the cytoplasm. It carries out the reaction adenosine(1518)/adenosine(1519) in 16S rRNA + 4 S-adenosyl-L-methionine = N(6)-dimethyladenosine(1518)/N(6)-dimethyladenosine(1519) in 16S rRNA + 4 S-adenosyl-L-homocysteine + 4 H(+). Functionally, specifically dimethylates two adjacent adenosines (A1518 and A1519) in the loop of a conserved hairpin near the 3'-end of 16S rRNA in the 30S particle. May play a critical role in biogenesis of 30S subunits. In Synechococcus sp. (strain JA-3-3Ab) (Cyanobacteria bacterium Yellowstone A-Prime), this protein is Ribosomal RNA small subunit methyltransferase A.